The primary structure comprises 206 residues: N-(5'-phosphoribosyl)anthranilate isomerase (206 aa).

The protein belongs to the TrpF family.

The enzyme catalyses N-(5-phospho-beta-D-ribosyl)anthranilate = 1-(2-carboxyphenylamino)-1-deoxy-D-ribulose 5-phosphate. The protein operates within amino-acid biosynthesis; L-tryptophan biosynthesis; L-tryptophan from chorismate: step 3/5. The polypeptide is N-(5'-phosphoribosyl)anthranilate isomerase (Pseudomonas putida (strain ATCC 47054 / DSM 6125 / CFBP 8728 / NCIMB 11950 / KT2440)).